A 221-amino-acid chain; its full sequence is Uridylate kinase (221 aa).

Residue 7–11 (KISGK) participates in ATP binding. Gly43 contacts UMP. 2 residues coordinate ATP: Gly44 and Arg48. Residues Asp62 and 109–115 (LQPGQST) contribute to the UMP site. ATP contacts are provided by Thr135 and Tyr141.

The protein belongs to the UMP kinase family. Homohexamer.

The protein localises to the cytoplasm. It carries out the reaction UMP + ATP = UDP + ADP. The protein operates within pyrimidine metabolism; CTP biosynthesis via de novo pathway; UDP from UMP (UMPK route): step 1/1. Its activity is regulated as follows. Inhibited by UTP. In terms of biological role, catalyzes the reversible phosphorylation of UMP to UDP. The protein is Uridylate kinase of Ignicoccus hospitalis (strain KIN4/I / DSM 18386 / JCM 14125).